The following is a 30-amino-acid chain: Photosystem I reaction center subunit XII (30 aa).

Residues 7–26 form a helical membrane-spanning segment; it reads IFVALLFALVSAVLAIRLGT.

The protein belongs to the PsaM family.

Its subcellular location is the plastid. It is found in the chloroplast thylakoid membrane. This chain is Photosystem I reaction center subunit XII, found in Gracilaria tenuistipitata var. liui (Red alga).